The primary structure comprises 264 residues: Thymidylate synthase (264 aa).

Arg-21 serves as a coordination point for dUMP. His-51 contacts (6R)-5,10-methylene-5,6,7,8-tetrahydrofolate. Residue 126–127 (RR) participates in dUMP binding. Catalysis depends on Cys-146, which acts as the Nucleophile. DUMP-binding positions include 166 to 169 (RSCD), Asn-177, and 207 to 209 (HLY). Asp-169 is a binding site for (6R)-5,10-methylene-5,6,7,8-tetrahydrofolate. A (6R)-5,10-methylene-5,6,7,8-tetrahydrofolate-binding site is contributed by Ala-263.

Belongs to the thymidylate synthase family. Bacterial-type ThyA subfamily. Homodimer.

Its subcellular location is the cytoplasm. It carries out the reaction dUMP + (6R)-5,10-methylene-5,6,7,8-tetrahydrofolate = 7,8-dihydrofolate + dTMP. It functions in the pathway pyrimidine metabolism; dTTP biosynthesis. Functionally, catalyzes the reductive methylation of 2'-deoxyuridine-5'-monophosphate (dUMP) to 2'-deoxythymidine-5'-monophosphate (dTMP) while utilizing 5,10-methylenetetrahydrofolate (mTHF) as the methyl donor and reductant in the reaction, yielding dihydrofolate (DHF) as a by-product. This enzymatic reaction provides an intracellular de novo source of dTMP, an essential precursor for DNA biosynthesis. The chain is Thymidylate synthase from Shewanella baltica (strain OS185).